Consider the following 177-residue polypeptide: Dual-action ribosomal maturation protein DarP (177 aa).

Positions 1-26 are disordered; that stretch reads MKIVGDSEHFKQPYDSDEEYVSKTED.

The protein belongs to the DarP family.

It is found in the cytoplasm. Member of a network of 50S ribosomal subunit biogenesis factors which assembles along the 30S-50S interface, preventing incorrect 23S rRNA structures from forming. Promotes peptidyl transferase center (PTC) maturation. The protein is Dual-action ribosomal maturation protein DarP of Shewanella sp. (strain ANA-3).